The primary structure comprises 285 residues: Extracellular metalloprotease SMAC_06893 (285 aa).

An N-terminal signal peptide occupies residues 1–18 (MQIKSLLLAAAAAPAALG). Histidine 197 contacts Zn(2+). Glutamate 198 is an active-site residue. Histidine 201 serves as a coordination point for Zn(2+). A disulfide bond links cysteine 233 and cysteine 260. A glycan (N-linked (GlcNAc...) asparagine) is linked at asparagine 282.

This sequence belongs to the peptidase M43B family.

It localises to the secreted. In terms of biological role, secreted metalloproteinase that allows assimilation of proteinaceous substrates. The sequence is that of Extracellular metalloprotease SMAC_06893 from Sordaria macrospora (strain ATCC MYA-333 / DSM 997 / K(L3346) / K-hell).